Here is a 347-residue protein sequence, read N- to C-terminus: Leucine-rich repeat-containing protein 69 (347 aa).

9 LRR repeats span residues 15–37 (NTKI…EKLP), 38–60 (NLKT…RTLT), 61–82 (QLTL…IKYL), 84–105 (SLKN…VFNG), 108–129 (RLIM…IGRL), 131–152 (SLTY…LCSL), 154–175 (HLSE…IKFL), 177–198 (NLQQ…ICHL), and 200–222 (KLRV…QNLR).

It belongs to the LRRC69 family.

This chain is Leucine-rich repeat-containing protein 69 (Lrrc69), found in Mus musculus (Mouse).